Reading from the N-terminus, the 245-residue chain is 1-(5-phosphoribosyl)-5-[(5-phosphoribosylamino)methylideneamino] imidazole-4-carboxamide isomerase (245 aa).

Catalysis depends on Asp-7, which acts as the Proton acceptor. Asp-129 (proton donor) is an active-site residue.

This sequence belongs to the HisA/HisF family.

It localises to the cytoplasm. The catalysed reaction is 1-(5-phospho-beta-D-ribosyl)-5-[(5-phospho-beta-D-ribosylamino)methylideneamino]imidazole-4-carboxamide = 5-[(5-phospho-1-deoxy-D-ribulos-1-ylimino)methylamino]-1-(5-phospho-beta-D-ribosyl)imidazole-4-carboxamide. It functions in the pathway amino-acid biosynthesis; L-histidine biosynthesis; L-histidine from 5-phospho-alpha-D-ribose 1-diphosphate: step 4/9. This is 1-(5-phosphoribosyl)-5-[(5-phosphoribosylamino)methylideneamino] imidazole-4-carboxamide isomerase from Shewanella baltica (strain OS195).